The primary structure comprises 45 residues: Large ribosomal subunit protein bL34 (45 aa).

Residues 26–45 (RAGRSILSARRSKGRSQLSA) are disordered.

This sequence belongs to the bacterial ribosomal protein bL34 family.

The chain is Large ribosomal subunit protein bL34 from Parafrankia sp. (strain EAN1pec).